We begin with the raw amino-acid sequence, 260 residues long: Acetylglutamate kinase (260 aa).

Substrate is bound by residues 41–42 (GG), Arg-63, and Asn-156.

This sequence belongs to the acetylglutamate kinase family. ArgB subfamily.

It localises to the cytoplasm. It carries out the reaction N-acetyl-L-glutamate + ATP = N-acetyl-L-glutamyl 5-phosphate + ADP. Its pathway is amino-acid biosynthesis; L-arginine biosynthesis; N(2)-acetyl-L-ornithine from L-glutamate: step 2/4. In terms of biological role, catalyzes the ATP-dependent phosphorylation of N-acetyl-L-glutamate. The chain is Acetylglutamate kinase from Halalkalibacterium halodurans (strain ATCC BAA-125 / DSM 18197 / FERM 7344 / JCM 9153 / C-125) (Bacillus halodurans).